The primary structure comprises 342 residues: Pre-mRNA-splicing factor 18 (342 aa).

M1 is subject to N-acetylmethionine.

It belongs to the PRP18 family. In terms of assembly, heterodimer with PPIH. Interacts with PRPF4 and with the spliceosome. Part of a complex containing U4/U6 snRNPs. Also detected in the cytoplasm. Detected in brain, heart, liver and skeletal muscle.

It localises to the nucleus speckle. Participates in the second step of pre-mRNA splicing. Down-regulates the expression of potassium channel subunits. This chain is Pre-mRNA-splicing factor 18 (Prpf18), found in Rattus norvegicus (Rat).